Consider the following 406-residue polypeptide: Acetylornithine aminotransferase (406 aa).

Pyridoxal 5'-phosphate is bound by residues 113-114 and Phe-145; that span reads GT. Residue Arg-148 participates in N(2)-acetyl-L-ornithine binding. 233 to 236 is a binding site for pyridoxal 5'-phosphate; sequence DEIQ. At Lys-262 the chain carries N6-(pyridoxal phosphate)lysine. Ser-290 is a N(2)-acetyl-L-ornithine binding site. Residue Thr-291 coordinates pyridoxal 5'-phosphate.

It belongs to the class-III pyridoxal-phosphate-dependent aminotransferase family. ArgD subfamily. In terms of assembly, homodimer. Pyridoxal 5'-phosphate serves as cofactor.

The protein resides in the cytoplasm. The enzyme catalyses N(2)-acetyl-L-ornithine + 2-oxoglutarate = N-acetyl-L-glutamate 5-semialdehyde + L-glutamate. It functions in the pathway amino-acid biosynthesis; L-arginine biosynthesis; N(2)-acetyl-L-ornithine from L-glutamate: step 4/4. This chain is Acetylornithine aminotransferase, found in Leptospira interrogans serogroup Icterohaemorrhagiae serovar Lai (strain 56601).